We begin with the raw amino-acid sequence, 211 residues long: dITP/XTP pyrophosphatase (211 aa).

Residue 7-12 coordinates substrate; sequence TSNKKK. Residues glutamate 43 and aspartate 72 each coordinate Mg(2+). Aspartate 72 (proton acceptor) is an active-site residue. Substrate contacts are provided by residues serine 73, 169–172, lysine 190, and 195–196; these read FGYD and HR.

This sequence belongs to the HAM1 NTPase family. As to quaternary structure, homodimer. The cofactor is Mg(2+).

It carries out the reaction XTP + H2O = XMP + diphosphate + H(+). It catalyses the reaction dITP + H2O = dIMP + diphosphate + H(+). The enzyme catalyses ITP + H2O = IMP + diphosphate + H(+). Functionally, pyrophosphatase that catalyzes the hydrolysis of nucleoside triphosphates to their monophosphate derivatives, with a high preference for the non-canonical purine nucleotides XTP (xanthosine triphosphate), dITP (deoxyinosine triphosphate) and ITP. Seems to function as a house-cleaning enzyme that removes non-canonical purine nucleotides from the nucleotide pool, thus preventing their incorporation into DNA/RNA and avoiding chromosomal lesions. This Hydrogenobaculum sp. (strain Y04AAS1) protein is dITP/XTP pyrophosphatase.